Here is a 313-residue protein sequence, read N- to C-terminus: tRNA pseudouridine synthase B (313 aa).

A substrate-binding site is contributed by His44. Asp49 (nucleophile) is an active-site residue. 3 residues coordinate substrate: Tyr77, Tyr180, and Leu201.

It belongs to the pseudouridine synthase TruB family. Type 1 subfamily.

It carries out the reaction uridine(55) in tRNA = pseudouridine(55) in tRNA. Its function is as follows. Responsible for synthesis of pseudouridine from uracil-55 in the psi GC loop of transfer RNAs. The protein is tRNA pseudouridine synthase B of Hamiltonella defensa subsp. Acyrthosiphon pisum (strain 5AT).